A 113-amino-acid polypeptide reads, in one-letter code: Signal peptidase complex subunit 1 (113 aa).

At 1–32 the chain is on the cytoplasmic side; that stretch reads MDGMIAMLPAPLQQLSSHIDFQGQKVAERTYQ. A helical transmembrane segment spans residues 33-53; the sequence is VILTLAGIIGFFVGYSTQQLS. At 54–57 the chain is on the lumenal side; that stretch reads YAMY. Residues 58-78 form a helical membrane-spanning segment; that stretch reads TVMGAAVFTALIILPPWPFLF. Residues 79-113 lie on the Cytoplasmic side of the membrane; that stretch reads RKNPIVWQTPIEEQEASSSSDNEKKDKKKETKKTK. A disordered region spans residues 89 to 113; that stretch reads IEEQEASSSSDNEKKDKKKETKKTK.

Belongs to the SPCS1 family. In terms of assembly, component of the signal peptidase complex (SPC) composed of a catalytic subunit sec-11 and three accessory subunits spcs-1, spcs-2 and spcs-3. The complex induces a local thinning of the ER membrane which is used to measure the length of the signal peptide (SP) h-region of protein substrates. This ensures the selectivity of the complex towards h-regions shorter than 18-20 amino acids.

Its subcellular location is the endoplasmic reticulum membrane. In terms of biological role, component of the signal peptidase complex (SPC) which catalyzes the cleavage of N-terminal signal sequences from nascent proteins as they are translocated into the lumen of the endoplasmic reticulum. Dispensable for SPC enzymatic activity. This is Signal peptidase complex subunit 1 from Caenorhabditis briggsae.